A 91-amino-acid polypeptide reads, in one-letter code: Pyruvate kinase (91 aa).

Residue arginine 48 coordinates substrate. Asparagine 50, serine 52, aspartate 82, and threonine 83 together coordinate K(+). ATP is bound at residue asparagine 50–histidine 53. Arginine 89 is a binding site for ATP.

This sequence belongs to the pyruvate kinase family. As to quaternary structure, homotetramer. It depends on Mg(2+) as a cofactor. K(+) is required as a cofactor.

The catalysed reaction is pyruvate + ATP = phosphoenolpyruvate + ADP + H(+). It participates in carbohydrate degradation; glycolysis; pyruvate from D-glyceraldehyde 3-phosphate: step 5/5. This Leishmania braziliensis protein is Pyruvate kinase.